Reading from the N-terminus, the 80-residue chain is uncharacterized protein (80 aa).

It to M.leprae U650M.

This is an uncharacterized protein from Mycobacterium bovis (strain ATCC BAA-935 / AF2122/97).